A 158-amino-acid polypeptide reads, in one-letter code: Phosphopantetheine adenylyltransferase (158 aa).

S8 contacts substrate. ATP contacts are provided by residues 8-9 and H16; that span reads SF. Residues K40, T72, and R86 each coordinate substrate. Residues 87–89, E97, and 122–128 contribute to the ATP site; these read GLR and HSFLSSS.

Belongs to the bacterial CoaD family. As to quaternary structure, homohexamer. The cofactor is Mg(2+).

It is found in the cytoplasm. It carries out the reaction (R)-4'-phosphopantetheine + ATP + H(+) = 3'-dephospho-CoA + diphosphate. The protein operates within cofactor biosynthesis; coenzyme A biosynthesis; CoA from (R)-pantothenate: step 4/5. In terms of biological role, reversibly transfers an adenylyl group from ATP to 4'-phosphopantetheine, yielding dephospho-CoA (dPCoA) and pyrophosphate. The chain is Phosphopantetheine adenylyltransferase from Prochlorococcus marinus (strain NATL1A).